Here is a 95-residue protein sequence, read N- to C-terminus: MNLKPLSDRVIVKPAAAEEKTKGGLYIPDTGKEKPQYGEVVAVGAGKIADNGQLLEMQVKVGSKVLYGKYSGTEVSVEGEDYLIMRESDIFAILG.

This sequence belongs to the GroES chaperonin family. In terms of assembly, heptamer of 7 subunits arranged in a ring. Interacts with the chaperonin GroEL.

It is found in the cytoplasm. Together with the chaperonin GroEL, plays an essential role in assisting protein folding. The GroEL-GroES system forms a nano-cage that allows encapsulation of the non-native substrate proteins and provides a physical environment optimized to promote and accelerate protein folding. GroES binds to the apical surface of the GroEL ring, thereby capping the opening of the GroEL channel. The protein is Co-chaperonin GroES of Pelodictyon phaeoclathratiforme (strain DSM 5477 / BU-1).